Reading from the N-terminus, the 215-residue chain is Putative zinc finger protein ORF121 (215 aa).

The RING-type; degenerate zinc-finger motif lies at 53-105 (CVICMEPTYTKKTLAECDIEGGALRVTTMPCPTHYICDNCIRQEMEDKCPICR).

This chain is Putative zinc finger protein ORF121, found in Magallana gigas (Pacific oyster).